Here is a 108-residue protein sequence, read N- to C-terminus: MFRSLFLAAALMAFTPLAANAGEITLLPSIKLQIGDRDHYGNYWDGGHWRDRDYWHRNYEWRKNRWWRHDNGYHRGWDKRKAYERGYREGWRDRDDHRGKGRGHGHRH.

Positions 1–21 are cleaved as a signal peptide; it reads MFRSLFLAAALMAFTPLAANA.

To E.coli YaaX.

This is an uncharacterized protein from Escherichia coli O157:H7.